The chain runs to 236 residues: (5-formylfuran-3-yl)methyl phosphate synthase (236 aa).

Lys27 acts as the Schiff-base intermediate with substrate in catalysis. Lys85 (proton acceptor) is an active-site residue.

This sequence belongs to the MfnB family.

The catalysed reaction is 2 D-glyceraldehyde 3-phosphate = 4-(hydroxymethyl)-2-furancarboxaldehyde phosphate + phosphate + 2 H2O. It participates in cofactor biosynthesis; methanofuran biosynthesis. Catalyzes the formation of 4-(hydroxymethyl)-2-furancarboxaldehyde phosphate (4-HFC-P) from two molecules of glyceraldehyde-3-P (GA-3-P). The sequence is that of (5-formylfuran-3-yl)methyl phosphate synthase from Methanococcus maripaludis (strain C6 / ATCC BAA-1332).